The primary structure comprises 183 residues: MGLEIVVKDIQEGASAEVSRIKAEGDAKASEIINEAKEVQKKTLGDSLAKAEEDLQNLHQQVISSANLEVKRITLNKRKDLLDKVYVQTVEKIKSMPASKKEELLKNILSKYEASGARVYSSKDSEDIVKKLTSLSYAGNLDAIGGIVLENEDGTVRLDFTYDSILKNVYERSLKQISDLLYG.

The protein belongs to the V-ATPase E subunit family. As to quaternary structure, has multiple subunits with at least A(3), B(3), C, D, E, F, H, I and proteolipid K(x).

It is found in the cell membrane. In terms of biological role, component of the A-type ATP synthase that produces ATP from ADP in the presence of a proton gradient across the membrane. The chain is A-type ATP synthase subunit E from Methanosarcina barkeri (strain Fusaro / DSM 804).